Reading from the N-terminus, the 442-residue chain is Glutamyl-tRNA reductase (442 aa).

Substrate contacts are provided by residues 49-52 (TCNR), serine 109, 114-116 (ESQ), and glutamine 120. Cysteine 50 functions as the Nucleophile in the catalytic mechanism. NADP(+) is bound at residue 189-194 (GAGAMS).

Belongs to the glutamyl-tRNA reductase family. As to quaternary structure, homodimer.

The catalysed reaction is (S)-4-amino-5-oxopentanoate + tRNA(Glu) + NADP(+) = L-glutamyl-tRNA(Glu) + NADPH + H(+). Its pathway is porphyrin-containing compound metabolism; protoporphyrin-IX biosynthesis; 5-aminolevulinate from L-glutamyl-tRNA(Glu): step 1/2. In terms of biological role, catalyzes the NADPH-dependent reduction of glutamyl-tRNA(Glu) to glutamate 1-semialdehyde (GSA). The sequence is that of Glutamyl-tRNA reductase from Kineococcus radiotolerans (strain ATCC BAA-149 / DSM 14245 / SRS30216).